A 302-amino-acid chain; its full sequence is Protein FdhE homolog (302 aa).

The protein belongs to the FdhE family.

The protein resides in the cytoplasm. Its function is as follows. Necessary for formate dehydrogenase activity. This is Protein FdhE homolog from Shewanella oneidensis (strain ATCC 700550 / JCM 31522 / CIP 106686 / LMG 19005 / NCIMB 14063 / MR-1).